We begin with the raw amino-acid sequence, 164 residues long: D-aminoacyl-tRNA deacylase (164 aa).

Positions 72 and 89 each coordinate tRNA. The Nucleophile role is filled by Thr90. A C-terminal adenosine nucleotide of tRNA motif is present at residues 104-107 (HLAK). Positions 149–150 (GP) match the Gly-cisPro motif, allows the protein to recognize chirality of D-amino acids motif.

It belongs to the DTD family. In terms of assembly, homodimer.

The protein resides in the cytoplasm. It carries out the reaction glycyl-tRNA(Ala) + H2O = tRNA(Ala) + glycine + H(+). The enzyme catalyses a D-aminoacyl-tRNA + H2O = a tRNA + a D-alpha-amino acid + H(+). The catalysed reaction is D-tyrosyl-tRNA(Tyr) + H2O = D-tyrosine + tRNA(Tyr). Its function is as follows. D-aminoacyl-tRNA deacylase, with no observable activity on tRNAs charged with their cognate L-amino acid. Probably acts by rejecting L-amino acids from its binding site rather than specific recognition of D-amino acids. Catalyzes the hydrolysis of D-tyrosyl-tRNA(Tyr), has no activity on correctly charged L-tyrosyl-tRNA(Tyr). Hydrolyzes correctly charged, achiral, glycyl-tRNA(Gly). Deacylates mischarged D.melanogaster and E.coli glycyl-tRNA(Ala). Probably acts via tRNA-based rather than protein-based catalysis. Acts on tRNAs only when the D-amino acid is either attached to the ribose 3'-OH or transferred to the 3'-OH from the 2'-OH through rapid transesterification. Binds a number of other D-amino acids (D-Arg, D-Glu, D-His, D-Lys, D-Ser), suggesting it may also deacylate other mischarged tRNAs. The polypeptide is D-aminoacyl-tRNA deacylase (Plasmodium falciparum (isolate 3D7)).